The following is a 360-amino-acid chain: UDP-3-O-acylglucosamine N-acyltransferase (360 aa).

The active-site Proton acceptor is the His256. The tract at residues 341–360 (EGSGAETAARPDDDRDEGRG) is disordered. The span at 349–360 (ARPDDDRDEGRG) shows a compositional bias: basic and acidic residues.

Belongs to the transferase hexapeptide repeat family. LpxD subfamily. As to quaternary structure, homotrimer.

The enzyme catalyses a UDP-3-O-[(3R)-3-hydroxyacyl]-alpha-D-glucosamine + a (3R)-hydroxyacyl-[ACP] = a UDP-2-N,3-O-bis[(3R)-3-hydroxyacyl]-alpha-D-glucosamine + holo-[ACP] + H(+). The protein operates within bacterial outer membrane biogenesis; LPS lipid A biosynthesis. In terms of biological role, catalyzes the N-acylation of UDP-3-O-acylglucosamine using 3-hydroxyacyl-ACP as the acyl donor. Is involved in the biosynthesis of lipid A, a phosphorylated glycolipid that anchors the lipopolysaccharide to the outer membrane of the cell. This chain is UDP-3-O-acylglucosamine N-acyltransferase, found in Rhodopseudomonas palustris (strain ATCC BAA-98 / CGA009).